A 459-amino-acid polypeptide reads, in one-letter code: MKLWGGRFTKPTNELVDEYASSIQFDKKLAAYDIEGSLAHVAMLKKCEIIPAEDADKIAEGLKIVLSKIEAGEAELSNEHEDIHMNVEKLLIDEVGPVGGRLHTGRSRNDQVALDMRLYLRDVIAELSDLLKAVQQSLITQAKANMDTVMPGYTHLQRAQPVLFAHHMMAYVFMFQRDVERFQDSLKRVNKSPLGAGALAGTTFPIDRHFVAEQLGFDGICENSLDAVSDRDFVVEFLSNSALVSTHLSRLCEELVQWSSAEFNFVELDDSFTTGSSMMPQKKNPDVAELVRGKTGRVYGHLMGMLTTLKGLPLAYNKDMQEDKEGMFDAHETLKGALQLFAPMMESMKVNKESMYKAVSNDYSNATDLADYLVNKGMTFRESHAVVGEAVLHCIEQNKYLLDLTLKEFKQYSEVIDEDIFDVLKPEAVVNARSVEGGTAKESVLQQIAKAEKLLESAK.

The protein belongs to the lyase 1 family. Argininosuccinate lyase subfamily.

It is found in the cytoplasm. It catalyses the reaction 2-(N(omega)-L-arginino)succinate = fumarate + L-arginine. It functions in the pathway amino-acid biosynthesis; L-arginine biosynthesis; L-arginine from L-ornithine and carbamoyl phosphate: step 3/3. The sequence is that of Argininosuccinate lyase from Oceanobacillus iheyensis (strain DSM 14371 / CIP 107618 / JCM 11309 / KCTC 3954 / HTE831).